Consider the following 520-residue polypeptide: Cytochrome P450 315a1, mitochondrial (520 aa).

Cys466 contacts heme.

This sequence belongs to the cytochrome P450 family. Heme serves as cofactor. Complex coexpression pattern of dib (disembodied) and sad (shade) in the early embryo that restricts to the prothoracic gland cells of the developing ring gland during late embryogenesis. In larvae and adult, coexpression is seen in prothoracic gland and follicle cells of the ovary. In adults, coexpression is seen in the follicle cells, sad only is expressed in nurse cells.

Its subcellular location is the mitochondrion membrane. It carries out the reaction 2-deoxyecdysone + 2 reduced [adrenodoxin] + O2 + 2 H(+) = ecdysone + 2 oxidized [adrenodoxin] + H2O. The catalysed reaction is 2,22-dideoxyecdysone + 2 reduced [adrenodoxin] + O2 + 2 H(+) = 22-deoxyecdysone + 2 oxidized [adrenodoxin] + H2O. It functions in the pathway steroid biosynthesis; ecdysteroid biosynthesis. Required for CNS development: midline glial cells. Involved in the metabolism of insect hormones: responsible for ecdysteroid C2-hydroxylase activity. May be involved in the breakdown of synthetic insecticides. This Drosophila melanogaster (Fruit fly) protein is Cytochrome P450 315a1, mitochondrial.